Reading from the N-terminus, the 404-residue chain is Cysteine desulfurase IscS (404 aa).

Residues Ala75–Thr76, Asn155, Gln183, and Ser203–His205 each bind pyridoxal 5'-phosphate. The residue at position 206 (Lys206) is an N6-(pyridoxal phosphate)lysine. Thr243 provides a ligand contact to pyridoxal 5'-phosphate. Cys328 functions as the Cysteine persulfide intermediate in the catalytic mechanism. Cys328 is a binding site for [2Fe-2S] cluster.

It belongs to the class-V pyridoxal-phosphate-dependent aminotransferase family. NifS/IscS subfamily. In terms of assembly, homodimer. Forms a heterotetramer with IscU, interacts with other sulfur acceptors. Pyridoxal 5'-phosphate serves as cofactor.

The protein resides in the cytoplasm. The enzyme catalyses (sulfur carrier)-H + L-cysteine = (sulfur carrier)-SH + L-alanine. It functions in the pathway cofactor biosynthesis; iron-sulfur cluster biosynthesis. In terms of biological role, master enzyme that delivers sulfur to a number of partners involved in Fe-S cluster assembly, tRNA modification or cofactor biosynthesis. Catalyzes the removal of elemental sulfur atoms from cysteine to produce alanine. Functions as a sulfur delivery protein for Fe-S cluster synthesis onto IscU, an Fe-S scaffold assembly protein, as well as other S acceptor proteins. This Pseudomonas putida (strain ATCC 700007 / DSM 6899 / JCM 31910 / BCRC 17059 / LMG 24140 / F1) protein is Cysteine desulfurase IscS.